Here is a 302-residue protein sequence, read N- to C-terminus: 4-hydroxy-tetrahydrodipicolinate synthase (302 aa).

Thr-50 serves as a coordination point for pyruvate. The active-site Proton donor/acceptor is the Tyr-138. Lys-167 serves as the catalytic Schiff-base intermediate with substrate. Val-209 lines the pyruvate pocket.

Belongs to the DapA family. As to quaternary structure, homotetramer; dimer of dimers.

Its subcellular location is the cytoplasm. It catalyses the reaction L-aspartate 4-semialdehyde + pyruvate = (2S,4S)-4-hydroxy-2,3,4,5-tetrahydrodipicolinate + H2O + H(+). The protein operates within amino-acid biosynthesis; L-lysine biosynthesis via DAP pathway; (S)-tetrahydrodipicolinate from L-aspartate: step 3/4. Catalyzes the condensation of (S)-aspartate-beta-semialdehyde [(S)-ASA] and pyruvate to 4-hydroxy-tetrahydrodipicolinate (HTPA). The protein is 4-hydroxy-tetrahydrodipicolinate synthase of Salinibacter ruber (strain DSM 13855 / M31).